A 247-amino-acid chain; its full sequence is Triosephosphate isomerase (247 aa).

9–11 (NWK) contributes to the substrate binding site. His-94 functions as the Electrophile in the catalytic mechanism. Glu-165 (proton acceptor) is an active-site residue. Substrate is bound by residues Gly-171, Ser-209, and 230-231 (GG).

It belongs to the triosephosphate isomerase family. Homodimer.

The protein localises to the cytoplasm. It catalyses the reaction D-glyceraldehyde 3-phosphate = dihydroxyacetone phosphate. It functions in the pathway carbohydrate biosynthesis; gluconeogenesis. Its pathway is carbohydrate degradation; glycolysis; D-glyceraldehyde 3-phosphate from glycerone phosphate: step 1/1. Functionally, involved in the gluconeogenesis. Catalyzes stereospecifically the conversion of dihydroxyacetone phosphate (DHAP) to D-glyceraldehyde-3-phosphate (G3P). This is Triosephosphate isomerase from Albidiferax ferrireducens (strain ATCC BAA-621 / DSM 15236 / T118) (Rhodoferax ferrireducens).